The sequence spans 459 residues: Sensor histidine kinase SpaK (459 aa).

Over 1-18 (MGIGFKGRKTLLRELVKY) the chain is Cytoplasmic. The helical transmembrane segment at 19 to 39 (MVTLCISLVVLALLYIFINTI) threads the bilayer. The Extracellular portion of the chain corresponds to 40 to 155 (AMNTGFSHPA…RKYLPNYELT (116 aa)). A helical membrane pass occupies residues 156-176 (SICILIILLIIVISIITTYFA). The Cytoplasmic portion of the chain corresponds to 177 to 459 (NRLRKHFETL…VRVKIPLRNE (283 aa)). The Histidine kinase domain occupies 244-458 (ALAHEIKIPI…EVRVKIPLRN (215 aa)). Phosphohistidine; by autocatalysis is present on His247.

The protein localises to the cell membrane. It catalyses the reaction ATP + protein L-histidine = ADP + protein N-phospho-L-histidine.. Member of the two-component regulatory system SpaK/SpaR involved in the regulation of the biosynthesis of lantibiotic subtilin. SpaK may function as a membrane-associated protein kinase that phosphorylates SpaR in response to environmental signals. The protein is Sensor histidine kinase SpaK (spaK) of Bacillus subtilis.